Consider the following 199-residue polypeptide: LIM domain-containing protein E (199 aa).

Residues 5-65 (VKCGACAKTA…PVHTPKVSAT (61 aa)) enclose the LIM zinc-binding domain. The tract at residues 134-199 (YAVFGADGQP…EEEQQYEEEQ (66 aa)) is disordered. Composition is skewed to low complexity over residues 146–155 (EQQEQQQYTE) and 163–174 (EEQQYQEEQQQY). The segment covering 175 to 199 (QEEEQQYQEEEQQYQEEEQQYEEEQ) has biased composition (acidic residues).

May interact with rac1A.

Its subcellular location is the cytoplasm. The protein resides in the cell cortex. It localises to the nucleus. It is found in the cell projection. The protein localises to the lamellipodium. Its subcellular location is the filopodium. The protein resides in the cytoskeleton. In terms of biological role, associates with the actin cytoskeleton and may regulate actin polymerization in lamellipodia, through a rac1-dependent signaling pathway. May play a role in cell motility. Involved in cytokinesis by regulating the microtubule system and linking it to the cortical actin network. The polypeptide is LIM domain-containing protein E (limE) (Dictyostelium discoideum (Social amoeba)).